The following is a 643-amino-acid chain: 1-deoxy-D-xylulose-5-phosphate synthase (643 aa).

Thiamine diphosphate-binding positions include H78 and 119-121; that span reads AHS. Residue D150 coordinates Mg(2+). Residues 151-152, N179, Y288, and E370 each bind thiamine diphosphate; that span reads GS. Mg(2+) is bound at residue N179.

It belongs to the transketolase family. DXPS subfamily. Homodimer. Requires Mg(2+) as cofactor. Thiamine diphosphate is required as a cofactor.

It catalyses the reaction D-glyceraldehyde 3-phosphate + pyruvate + H(+) = 1-deoxy-D-xylulose 5-phosphate + CO2. It participates in metabolic intermediate biosynthesis; 1-deoxy-D-xylulose 5-phosphate biosynthesis; 1-deoxy-D-xylulose 5-phosphate from D-glyceraldehyde 3-phosphate and pyruvate: step 1/1. In terms of biological role, catalyzes the acyloin condensation reaction between C atoms 2 and 3 of pyruvate and glyceraldehyde 3-phosphate to yield 1-deoxy-D-xylulose-5-phosphate (DXP). In Brucella suis (strain ATCC 23445 / NCTC 10510), this protein is 1-deoxy-D-xylulose-5-phosphate synthase.